The chain runs to 1300 residues: Insulin receptor-related protein (1300 aa).

The N-terminal stretch at Met1–Thr26 is a signal peptide. Asn47 and Asn100 each carry an N-linked (GlcNAc...) asparagine glycan. 9 disulfides stabilise this stretch: Cys214/Cys222, Cys216/Cys228, Cys229/Cys237, Cys233/Cys246, Cys249/Cys258, Cys262/Cys274, Cys280/Cys300, Cys304/Cys317, and Cys320/Cys324. The N-linked (GlcNAc...) asparagine glycan is linked to Asn311. N-linked (GlcNAc...) asparagine glycosylation is found at Asn411, Asn492, Asn528, Asn616, Asn634, Asn756, Asn885, and Asn898. Fibronectin type-III domains are found at residues Gln483–Ala603 and Val607–Val707. Residues Cys657 and Cys864 are joined by a disulfide bond. At Glu747–Arg921 the chain is on the extracellular side. A Fibronectin type-III 3 domain is found at Ile818–Glu913. A helical membrane pass occupies residues Ile922–Phe943. At Tyr944–His1300 the chain is on the cytoplasmic side. The region spanning Ile979–Phe1254 is the Protein kinase domain. ATP contacts are provided by residues Leu985–Val993 and Lys1013. Asp1115 serves as the catalytic Proton acceptor. Tyr1145 and Tyr1146 each carry phosphotyrosine; by autocatalysis. The disordered stretch occupies residues Leu1273–His1300.

The protein belongs to the protein kinase superfamily. Tyr protein kinase family. Insulin receptor subfamily. In terms of assembly, probable tetramer of 2 alpha and 2 beta chains linked by disulfide bonds. The alpha chains contribute to the formation of the ligand-binding domain, while the beta chains carry the kinase domain. Post-translationally, autophosphorylated on tyrosine residues between pH 7.9 and pH 10.5. As to expression, highly expressed in the islets as well as in pancreatic beta-cells.

Its subcellular location is the membrane. It catalyses the reaction L-tyrosyl-[protein] + ATP = O-phospho-L-tyrosyl-[protein] + ADP + H(+). Receptor with tyrosine-protein kinase activity. Functions as a pH sensing receptor which is activated by increased extracellular pH. Activates an intracellular signaling pathway that involves IRS1 and AKT1/PKB. The polypeptide is Insulin receptor-related protein (Insrr) (Mus musculus (Mouse)).